The primary structure comprises 418 residues: L-rhamnose isomerase (418 aa).

Mn(2+) is bound by residues H262, D294, and D296.

It belongs to the rhamnose isomerase family. As to quaternary structure, homotetramer. Mn(2+) is required as a cofactor.

It localises to the cytoplasm. It catalyses the reaction L-rhamnopyranose = L-rhamnulose. The protein operates within carbohydrate degradation; L-rhamnose degradation; glycerone phosphate from L-rhamnose: step 1/3. Catalyzes the interconversion of L-rhamnose and L-rhamnulose. This is L-rhamnose isomerase from Yersinia pseudotuberculosis serotype O:1b (strain IP 31758).